We begin with the raw amino-acid sequence, 334 residues long: Glucan endo-1,3-beta-glucosidase GII (334 aa).

The first 28 residues, 1-28 (MARKDVASMFAAALFIGAFAAVPTSVQS), serve as a signal peptide directing secretion. Residue E122 is the Proton donor of the active site. The active-site Nucleophile is E259.

This sequence belongs to the glycosyl hydrolase 17 family.

It catalyses the reaction Hydrolysis of (1-&gt;3)-beta-D-glucosidic linkages in (1-&gt;3)-beta-D-glucans.. Its function is as follows. May provide a degree of protection against microbial invasion of germinated barley grain through its ability to degrade fungal cell wall polysaccharides. Hydrolyzes laminarin in vitro. The protein is Glucan endo-1,3-beta-glucosidase GII of Hordeum vulgare (Barley).